A 250-amino-acid polypeptide reads, in one-letter code: tRNA (guanine-N(1)-)-methyltransferase (250 aa).

Residues Gly-115 and 135-140 contribute to the S-adenosyl-L-methionine site; that span reads LGDFVL.

Belongs to the RNA methyltransferase TrmD family. As to quaternary structure, homodimer.

The protein localises to the cytoplasm. It carries out the reaction guanosine(37) in tRNA + S-adenosyl-L-methionine = N(1)-methylguanosine(37) in tRNA + S-adenosyl-L-homocysteine + H(+). In terms of biological role, specifically methylates guanosine-37 in various tRNAs. This Legionella pneumophila (strain Paris) protein is tRNA (guanine-N(1)-)-methyltransferase.